We begin with the raw amino-acid sequence, 440 residues long: Protein OSB3, chloroplastic/mitochondrial (440 aa).

Residues 1–61 constitute a chloroplast and mitochondrion transit peptide; sequence MNLISRTLTR…AKVSVKPPLN (61 aa). Residues 80–178 form the SSB domain; the sequence is ISNWINLIGF…VMVQNLNFVQ (99 aa). PDF region stretches follow at residues 218–270, 294–342, and 380–428; these read WKHL…LKLE, WKDL…SKLP, and WKNL…SKLP.

In terms of tissue distribution, expressed primarily in the female gametophyte and in the floral abscission zone.

It localises to the mitochondrion. The protein resides in the plastid. It is found in the chloroplast. Binds single-stranded DNA. This is Protein OSB3, chloroplastic/mitochondrial (OSB3) from Arabidopsis thaliana (Mouse-ear cress).